We begin with the raw amino-acid sequence, 109 residues long: Set1 complex component sdc1 (109 aa).

Positions 49 to 109 are disordered; the sequence is QQKQKEIVNQ…SSNPGKNSAS (61 aa). A compositionally biased stretch (polar residues) spans 73–87; the sequence is STPTMAEQVQTSFSN. Residues 88–101 are compositionally biased toward low complexity; sequence PASTPLTQTSSPSS.

The protein belongs to the dpy-30 family. In terms of assembly, component of the COMPASS (Set1C) complex composed of ash2, sdc1, set1, shg1, spp1, swd1, swd2 and swd3. Component of the Lid2 complex composed of ash2, jmj3, lid2, sdc1 and snt2.

It is found in the nucleus. Functionally, the COMPASS (Set1C) complex specifically mono-, di- and trimethylates histone H3 to form H3K4me1/2/3, which subsequently activates gene expression by regulating transcription elongation and plays a role in telomere length maintenance. The sequence is that of Set1 complex component sdc1 (sdc1) from Schizosaccharomyces pombe (strain 972 / ATCC 24843) (Fission yeast).